The following is a 487-amino-acid chain: Probable UDP-N-acetylglucosamine pyrophosphorylase (487 aa).

The Substrate binding motif lies at 105-108 (LAGG). UTP-binding positions include 105–108 (LAGG), lysine 119, glutamine 198, and glycine 225. Asparagine 226 provides a ligand contact to substrate. A UTP-binding site is contributed by aspartate 256. The Substrate binding signature appears at 307-308 (EY). UTP is bound at residue lysine 382. Lysine 412 lines the substrate pocket.

This sequence belongs to the UDPGP type 1 family.

The protein localises to the cytoplasm. The catalysed reaction is N-acetyl-alpha-D-glucosamine 1-phosphate + UTP + H(+) = UDP-N-acetyl-alpha-D-glucosamine + diphosphate. The protein operates within nucleotide-sugar biosynthesis; UDP-N-acetyl-alpha-D-glucosamine biosynthesis; UDP-N-acetyl-alpha-D-glucosamine from N-acetyl-alpha-D-glucosamine 1-phosphate: step 1/1. The sequence is that of Probable UDP-N-acetylglucosamine pyrophosphorylase (uap1) from Dictyostelium discoideum (Social amoeba).